The following is a 332-amino-acid chain: DNA-directed RNA polymerase subunit alpha (332 aa).

An alpha N-terminal domain (alpha-NTD) region spans residues 1 to 230 (MKKITTSAYM…KQMSIFNNVL (230 aa)). An alpha C-terminal domain (alpha-CTD) region spans residues 246-332 (EHSKLLESVE…LRKKISELKS (87 aa)).

The protein belongs to the RNA polymerase alpha chain family. Homodimer. The RNAP catalytic core consists of 2 alpha, 1 beta, 1 beta' and 1 omega subunit. When a sigma factor is associated with the core the holoenzyme is formed, which can initiate transcription.

The catalysed reaction is RNA(n) + a ribonucleoside 5'-triphosphate = RNA(n+1) + diphosphate. In terms of biological role, DNA-dependent RNA polymerase catalyzes the transcription of DNA into RNA using the four ribonucleoside triphosphates as substrates. The sequence is that of DNA-directed RNA polymerase subunit alpha from Campylobacter fetus subsp. fetus (strain 82-40).